Here is a 360-residue protein sequence, read N- to C-terminus: Phospho-N-acetylmuramoyl-pentapeptide-transferase (360 aa).

The next 10 membrane-spanning stretches (helical) occupy residues 21–41 (YVTF…LWWG), 74–94 (MGGL…GDLG), 97–117 (YVWV…IDDY), 134–154 (YILQ…SAGS), 168–188 (VMPQ…VGSS), 199–219 (GLAI…AYLS), 236–256 (SGEL…FLWF), 263–283 (VFMG…IAVL), 288–308 (ILLV…ILQV), and 338–358 (VIVR…ATLK).

It belongs to the glycosyltransferase 4 family. MraY subfamily. The cofactor is Mg(2+).

The protein localises to the cell inner membrane. The catalysed reaction is UDP-N-acetyl-alpha-D-muramoyl-L-alanyl-gamma-D-glutamyl-meso-2,6-diaminopimeloyl-D-alanyl-D-alanine + di-trans,octa-cis-undecaprenyl phosphate = di-trans,octa-cis-undecaprenyl diphospho-N-acetyl-alpha-D-muramoyl-L-alanyl-D-glutamyl-meso-2,6-diaminopimeloyl-D-alanyl-D-alanine + UMP. It functions in the pathway cell wall biogenesis; peptidoglycan biosynthesis. Functionally, catalyzes the initial step of the lipid cycle reactions in the biosynthesis of the cell wall peptidoglycan: transfers peptidoglycan precursor phospho-MurNAc-pentapeptide from UDP-MurNAc-pentapeptide onto the lipid carrier undecaprenyl phosphate, yielding undecaprenyl-pyrophosphoryl-MurNAc-pentapeptide, known as lipid I. The protein is Phospho-N-acetylmuramoyl-pentapeptide-transferase of Shewanella loihica (strain ATCC BAA-1088 / PV-4).